A 361-amino-acid chain; its full sequence is Probable galacturonosyltransferase-like 5 (361 aa).

Over 1–6 the chain is Cytoplasmic; that stretch reads MHWITR. A helical; Signal-anchor for type II membrane protein transmembrane segment spans residues 7-27; that stretch reads FSAFFSAALAMILLSPSLQSF. The Lumenal segment spans residues 28–361; sequence SPAAAIRSSH…APYDLYKHSH (334 aa). 2 N-linked (GlcNAc...) asparagine glycosylation sites follow: asparagine 218 and asparagine 234.

Belongs to the glycosyltransferase 8 family.

It localises to the golgi apparatus membrane. It functions in the pathway glycan metabolism; pectin biosynthesis. In terms of biological role, may be involved in pectin and/or xylans biosynthesis in cell walls. This Arabidopsis thaliana (Mouse-ear cress) protein is Probable galacturonosyltransferase-like 5 (GATL5).